A 262-amino-acid polypeptide reads, in one-letter code: Phosphatidylserine decarboxylase proenzyme (262 aa).

Active-site charge relay system; for autoendoproteolytic cleavage activity residues include Asp-86, His-142, and Ser-226. Catalysis depends on Ser-226, which acts as the Schiff-base intermediate with substrate; via pyruvic acid; for decarboxylase activity. A Pyruvic acid (Ser); by autocatalysis modification is found at Ser-226.

It belongs to the phosphatidylserine decarboxylase family. PSD-B subfamily. Prokaryotic type I sub-subfamily. Heterodimer of a large membrane-associated beta subunit and a small pyruvoyl-containing alpha subunit. The cofactor is pyruvate. Post-translationally, is synthesized initially as an inactive proenzyme. Formation of the active enzyme involves a self-maturation process in which the active site pyruvoyl group is generated from an internal serine residue via an autocatalytic post-translational modification. Two non-identical subunits are generated from the proenzyme in this reaction, and the pyruvate is formed at the N-terminus of the alpha chain, which is derived from the carboxyl end of the proenzyme. The autoendoproteolytic cleavage occurs by a canonical serine protease mechanism, in which the side chain hydroxyl group of the serine supplies its oxygen atom to form the C-terminus of the beta chain, while the remainder of the serine residue undergoes an oxidative deamination to produce ammonia and the pyruvoyl prosthetic group on the alpha chain. During this reaction, the Ser that is part of the protease active site of the proenzyme becomes the pyruvoyl prosthetic group, which constitutes an essential element of the active site of the mature decarboxylase.

Its subcellular location is the cell membrane. It catalyses the reaction a 1,2-diacyl-sn-glycero-3-phospho-L-serine + H(+) = a 1,2-diacyl-sn-glycero-3-phosphoethanolamine + CO2. The protein operates within phospholipid metabolism; phosphatidylethanolamine biosynthesis; phosphatidylethanolamine from CDP-diacylglycerol: step 2/2. Functionally, catalyzes the formation of phosphatidylethanolamine (PtdEtn) from phosphatidylserine (PtdSer). This Bacillus cereus (strain B4264) protein is Phosphatidylserine decarboxylase proenzyme.